The chain runs to 423 residues: Dihydrolipoyllysine-residue succinyltransferase component of 2-oxoglutarate dehydrogenase complex (423 aa).

The region spanning 1 to 76 is the Lipoyl-binding domain; sequence MPEVKVPELA…EVGQAIAVIG (76 aa). The residue at position 42 (Lys42) is an N6-lipoyllysine. Positions 76-185 are disordered; that stretch reads GEGSGNASKE…APAKEEKKYN (110 aa). Over residues 80 to 96 the composition is skewed to polar residues; sequence GNASKENSNDNTPQQND. Residues 99–115 are compositionally biased toward basic and acidic residues; the sequence is TNNKKEETTNKSADKAE. Over residues 116–131 the composition is skewed to polar residues; sequence VNQTNDDNQQRVNATP. Residues 128–164 form the Peripheral subunit-binding (PSBD) domain; sequence NATPSARRYARENGVNLAEVSPKTNDVVRKEDIDKKQ. A compositionally biased stretch (basic and acidic residues) spans 153-164; that stretch reads DVVRKEDIDKKQ. The segment covering 165 to 177 has biased composition (low complexity); sequence QAPASTQTTQQAP. Residues His394 and Asp398 contribute to the active site.

Belongs to the 2-oxoacid dehydrogenase family. As to quaternary structure, forms a 24-polypeptide structural core with octahedral symmetry. Part of the 2-oxoglutarate dehydrogenase (OGDH) complex composed of E1 (2-oxoglutarate dehydrogenase), E2 (dihydrolipoamide succinyltransferase) and E3 (dihydrolipoamide dehydrogenase); the complex contains multiple copies of the three enzymatic components (E1, E2 and E3). Requires (R)-lipoate as cofactor.

It catalyses the reaction N(6)-[(R)-dihydrolipoyl]-L-lysyl-[protein] + succinyl-CoA = N(6)-[(R)-S(8)-succinyldihydrolipoyl]-L-lysyl-[protein] + CoA. It participates in amino-acid degradation; L-lysine degradation via saccharopine pathway; glutaryl-CoA from L-lysine: step 6/6. Functionally, E2 component of the 2-oxoglutarate dehydrogenase (OGDH) complex which catalyzes the second step in the conversion of 2-oxoglutarate to succinyl-CoA and CO(2). The protein is Dihydrolipoyllysine-residue succinyltransferase component of 2-oxoglutarate dehydrogenase complex (odhB) of Staphylococcus aureus (strain MRSA252).